A 245-amino-acid chain; its full sequence is NADH-quinone oxidoreductase subunit C (245 aa).

Positions 1-10 are enriched in basic and acidic residues; sequence MSAPQDRTDD. Disordered stretches follow at residues 1 to 54 and 216 to 245; these read MSAP…GYGG and PQRKDYPLGGVPVEYKGAEIPPPDRRRSYQ. A compositionally biased stretch (low complexity) spans 11-28; that stretch reads GGVPVPVTPAGATGGAPA. Gly residues predominate over residues 39 to 54; the sequence is GMFGDQGTGDVSGYGG.

This sequence belongs to the complex I 30 kDa subunit family. As to quaternary structure, NDH-1 is composed of 14 different subunits. Subunits NuoB, C, D, E, F, and G constitute the peripheral sector of the complex.

It localises to the cell membrane. The enzyme catalyses a quinone + NADH + 5 H(+)(in) = a quinol + NAD(+) + 4 H(+)(out). In terms of biological role, NDH-1 shuttles electrons from NADH, via FMN and iron-sulfur (Fe-S) centers, to quinones in the respiratory chain. The immediate electron acceptor for the enzyme in this species is believed to be a menaquinone. Couples the redox reaction to proton translocation (for every two electrons transferred, four hydrogen ions are translocated across the cytoplasmic membrane), and thus conserves the redox energy in a proton gradient. This Salinispora tropica (strain ATCC BAA-916 / DSM 44818 / JCM 13857 / NBRC 105044 / CNB-440) protein is NADH-quinone oxidoreductase subunit C.